The sequence spans 201 residues: Protein LIGHT-DEPENDENT SHORT HYPOCOTYLS 2 (201 aa).

A compositionally biased stretch (polar residues) spans 1 to 14; the sequence is MDLISQNHNNRNPN. 2 disordered regions span residues 1–37 and 151–201; these read MDLISQNHNNRNPNTSLSTQTPSSFSSPPSSSRYENQ and SRGV…GATQ. Low complexity predominate over residues 15–32; sequence TSLSTQTPSSFSSPPSSS. The ALOG domain occupies 33-160; that stretch reads RYENQKRRDW…SRGVSYEKKR (128 aa). Residues 158–162 carry the Nuclear localization signal motif; it reads KKRKR.

It belongs to the plant homeotic and developmental regulators ALOG protein family.

It is found in the nucleus. Functionally, probable transcription regulator that acts as a developmental regulator by promoting cell growth in response to light. This is Protein LIGHT-DEPENDENT SHORT HYPOCOTYLS 2 (LSH2) from Arabidopsis thaliana (Mouse-ear cress).